Here is an 841-residue protein sequence, read N- to C-terminus: GRIP1-associated protein 1 (841 aa).

The residue at position 2 (Ala-2) is an N-acetylalanine. Coiled coils occupy residues 4–161 (ALSE…YGKE) and 208–641 (EQLQ…NSKS). Disordered stretches follow at residues 532–551 (AEESLQQQQQEQEEALKQCR) and 558–580 (LKGKEEELQDVRDQLEQAQEERD). 8 positions are modified to phosphoserine: Ser-655, Ser-666, Ser-668, Ser-669, Ser-688, Ser-690, Ser-691, and Ser-692. A disordered region spans residues 681 to 706 (SSAVPARSLSSSPQAQPPRPAELSDE). The segment covering 682–694 (SAVPARSLSSSPQ) has biased composition (low complexity). 2 coiled-coil regions span residues 701 to 735 (AELSDEEVAELFQRLAETQQEKWMLEEKVKHLEVS) and 785 to 814 (DENLREMNKKLQNMLEEQLTKNMHLHKDME).

In terms of assembly, interacts with GRIP1, GRIP2 and AMPA receptors. Interacts (via C-terminus) with MAPK8/JNK1 and MAP3K1/MEKK1; the interaction promotes MAP3K1-mediated phosphorylation of MAPK8. Interacts (via N-terminus) with RAB4A (in GTP-bound form). Interacts (via C-terminus) with STX12. In terms of processing, proteolytically cleaved by caspase-3. A minor C-terminal proteolytic fragment of 30 kDa is produced. Proteolytic cleavage is required for JNK signaling activation.

The protein localises to the early endosome membrane. It is found in the recycling endosome membrane. Its subcellular location is the cell projection. The protein resides in the axon. It localises to the dendrite. The protein localises to the synapse. Functionally, regulates the endosomal recycling back to the neuronal plasma membrane, possibly by connecting early and late recycling endosomal domains and promoting segregation of recycling endosomes from early endosomal membranes. Involved in the localization of recycling endosomes to dendritic spines, thereby playing a role in the maintenance of dendritic spine morphology. Required for the activity-induced AMPA receptor recycling to dendrite membranes and for long-term potentiation and synaptic plasticity. Functions as a scaffold protein to facilitate MAP3K1/MEKK1-mediated activation of the JNK1 kinase by phosphorylation, possibly by bringing MAP3K1/MEKK1 and JNK1 in close proximity. This Homo sapiens (Human) protein is GRIP1-associated protein 1.